We begin with the raw amino-acid sequence, 54 residues long: Large ribosomal subunit protein bL33B (54 aa).

This sequence belongs to the bacterial ribosomal protein bL33 family.

This chain is Large ribosomal subunit protein bL33B (rpmG2), found in Streptomyces coelicolor (strain ATCC BAA-471 / A3(2) / M145).